A 521-amino-acid chain; its full sequence is Apolipoprotein N-acyltransferase (521 aa).

6 helical membrane passes run 27-47, 64-84, 93-113, 125-145, 167-187, and 202-222; these read VLLA…IAFA, LGFV…TIVV, IVSV…PAVV, ISLL…RAFL, IADI…NVVL, and YPVK…AYGF. The region spanning 239–483 is the CN hydrolase domain; it reads IQGNIDQNIK…EAVLNGEVRL (245 aa). Glutamate 281 acts as the Proton acceptor in catalysis. The active site involves lysine 344. Cysteine 394 functions as the Nucleophile in the catalytic mechanism. Residues 493 to 513 form a helical membrane-spanning segment; sequence YGDVFAWACVAGAAVVAALAF.

It belongs to the CN hydrolase family. Apolipoprotein N-acyltransferase subfamily.

It is found in the cell inner membrane. It carries out the reaction N-terminal S-1,2-diacyl-sn-glyceryl-L-cysteinyl-[lipoprotein] + a glycerophospholipid = N-acyl-S-1,2-diacyl-sn-glyceryl-L-cysteinyl-[lipoprotein] + a 2-acyl-sn-glycero-3-phospholipid + H(+). It participates in protein modification; lipoprotein biosynthesis (N-acyl transfer). Functionally, catalyzes the phospholipid dependent N-acylation of the N-terminal cysteine of apolipoprotein, the last step in lipoprotein maturation. The sequence is that of Apolipoprotein N-acyltransferase from Geobacter metallireducens (strain ATCC 53774 / DSM 7210 / GS-15).